The following is a 366-amino-acid chain: Histidinol-phosphate aminotransferase 2 (366 aa).

Residues 1–11 show a composition bias toward polar residues; the sequence is MQVKDQLSSLQ. Residues 1–21 are disordered; it reads MQVKDQLSSLQPYKPGKSPEQ. Lys222 bears the N6-(pyridoxal phosphate)lysine mark.

Belongs to the class-II pyridoxal-phosphate-dependent aminotransferase family. Histidinol-phosphate aminotransferase subfamily. In terms of assembly, homodimer. Pyridoxal 5'-phosphate is required as a cofactor.

The catalysed reaction is L-histidinol phosphate + 2-oxoglutarate = 3-(imidazol-4-yl)-2-oxopropyl phosphate + L-glutamate. Its pathway is amino-acid biosynthesis; L-histidine biosynthesis; L-histidine from 5-phospho-alpha-D-ribose 1-diphosphate: step 7/9. The sequence is that of Histidinol-phosphate aminotransferase 2 from Bacillus cereus (strain ATCC 10987 / NRS 248).